The sequence spans 411 residues: 2,3-bisphosphoglycerate-independent phosphoglycerate mutase (411 aa).

The protein belongs to the BPG-independent phosphoglycerate mutase family. A-PGAM subfamily.

The enzyme catalyses (2R)-2-phosphoglycerate = (2R)-3-phosphoglycerate. The protein operates within carbohydrate degradation; glycolysis; pyruvate from D-glyceraldehyde 3-phosphate: step 3/5. In terms of biological role, catalyzes the interconversion of 2-phosphoglycerate and 3-phosphoglycerate. This Pyrobaculum islandicum (strain DSM 4184 / JCM 9189 / GEO3) protein is 2,3-bisphosphoglycerate-independent phosphoglycerate mutase.